The following is a 223-amino-acid chain: Ribosome assembly factor mrt4 (223 aa).

The protein belongs to the universal ribosomal protein uL10 family. Associates with the pre-60S ribosomal particle.

It localises to the nucleus. The protein resides in the nucleolus. The protein localises to the cytoplasm. Its function is as follows. Component of the ribosome assembly machinery. Nuclear paralog of the ribosomal protein P0, it binds pre-60S subunits at an early stage of assembly in the nucleolus, and is replaced by P0 in cytoplasmic pre-60S subunits and mature 80S ribosomes. The polypeptide is Ribosome assembly factor mrt4 (Dictyostelium discoideum (Social amoeba)).